The sequence spans 86 residues: UPF0437 protein Ava_4254 (86 aa).

It belongs to the UPF0437 family.

The polypeptide is UPF0437 protein Ava_4254 (Trichormus variabilis (strain ATCC 29413 / PCC 7937) (Anabaena variabilis)).